Here is a 473-residue protein sequence, read N- to C-terminus: 3-isopropylmalate dehydratase large subunit (473 aa).

Cysteine 351, cysteine 414, and cysteine 417 together coordinate [4Fe-4S] cluster.

This sequence belongs to the aconitase/IPM isomerase family. LeuC type 1 subfamily. In terms of assembly, heterodimer of LeuC and LeuD. [4Fe-4S] cluster serves as cofactor.

It carries out the reaction (2R,3S)-3-isopropylmalate = (2S)-2-isopropylmalate. It participates in amino-acid biosynthesis; L-leucine biosynthesis; L-leucine from 3-methyl-2-oxobutanoate: step 2/4. Its function is as follows. Catalyzes the isomerization between 2-isopropylmalate and 3-isopropylmalate, via the formation of 2-isopropylmaleate. The sequence is that of 3-isopropylmalate dehydratase large subunit from Paracidovorax citrulli (strain AAC00-1) (Acidovorax citrulli).